The primary structure comprises 57 residues: Large ribosomal subunit protein bL32 (57 aa).

The disordered stretch occupies residues 1 to 22; the sequence is MAVPKKKTSKSKRDKRRATWRH.

It belongs to the bacterial ribosomal protein bL32 family.

The chain is Large ribosomal subunit protein bL32 from Nostoc punctiforme (strain ATCC 29133 / PCC 73102).